We begin with the raw amino-acid sequence, 511 residues long: Endoglucanase B (511 aa).

The N-terminal stretch at 1-29 (MNLLSGWVRPLMLGCGLLGAALSAGSIQA) is a signal peptide. In terms of domain architecture, CBM2 spans 30–130 (AVCEYRVTNE…AVTGAICGGQ (101 aa)). Cys32 and Cys127 are joined by a disulfide. The segment at 137–173 (SVASSSSSSSVVSSTPRSSSSSVSSSVPGTSSSSSSS) is disordered. The CBM10 domain maps to 180-209 (ACNWYGTLTPLCNNTSNGWGYEDGRSCVAR). Disulfide bonds link Cys181–Cys212 and Cys191–Cys206. Asp276 functions as the Nucleophile in the catalytic mechanism. Asp393 functions as the Proton donor in the catalytic mechanism.

Belongs to the glycosyl hydrolase 45 (cellulase K) family.

It localises to the periplasm. It carries out the reaction Endohydrolysis of (1-&gt;4)-beta-D-glucosidic linkages in cellulose, lichenin and cereal beta-D-glucans.. Its function is as follows. This enzyme catalyzes the endohydrolysis of 1,4-beta-glucosidic linkages in cellulose, lichenin and cereal beta-D-glucans. EGB is most active against barley beta-glucan, but showed significant activity against amorphous and crystalline cellulose. The sequence is that of Endoglucanase B (celB) from Cellvibrio japonicus (strain Ueda107) (Pseudomonas fluorescens subsp. cellulosa).